A 203-amino-acid polypeptide reads, in one-letter code: Glycerol-3-phosphate acyltransferase (203 aa).

Transmembrane regions (helical) follow at residues 13–33, 62–82, 88–108, 118–138, and 159–179; these read TLAC…LILT, LAAA…AIAS, AGIA…WLSF, IGVL…IWLA, and IALY…MTAI.

Belongs to the PlsY family. In terms of assembly, probably interacts with PlsX.

The protein localises to the cell inner membrane. It catalyses the reaction an acyl phosphate + sn-glycerol 3-phosphate = a 1-acyl-sn-glycero-3-phosphate + phosphate. Its pathway is lipid metabolism; phospholipid metabolism. In terms of biological role, catalyzes the transfer of an acyl group from acyl-phosphate (acyl-PO(4)) to glycerol-3-phosphate (G3P) to form lysophosphatidic acid (LPA). This enzyme utilizes acyl-phosphate as fatty acyl donor, but not acyl-CoA or acyl-ACP. This chain is Glycerol-3-phosphate acyltransferase, found in Rhizobium meliloti (strain 1021) (Ensifer meliloti).